A 146-amino-acid polypeptide reads, in one-letter code: MAQERPSCAVEPEHVQRLLLSSREAKKSAYCPYSRFPVGAALLTGDGRIFSGCNIENACYPLGVCAERTAIQKAISEGYKDFRAIAISSDLQEEFISPCGACRQVMREFGTDWAVYMTKPDGTFVVRTVQELLPASFGPEDLQKIQ.

Residues 13–140 (EHVQRLLLSS…ELLPASFGPE (128 aa)) form the CMP/dCMP-type deaminase domain. Residue 54 to 56 (NIE) participates in substrate binding. Cys-65 contributes to the Zn(2+) binding site. Catalysis depends on Glu-67, which acts as the Proton donor. Zn(2+) contacts are provided by Cys-99 and Cys-102.

Belongs to the cytidine and deoxycytidylate deaminase family. Homotetramer. The cofactor is Zn(2+).

It catalyses the reaction cytidine + H2O + H(+) = uridine + NH4(+). It carries out the reaction 2'-deoxycytidine + H2O + H(+) = 2'-deoxyuridine + NH4(+). This enzyme scavenges exogenous and endogenous cytidine and 2'-deoxycytidine for UMP synthesis. The protein is Cytidine deaminase (Cda) of Mus musculus (Mouse).